We begin with the raw amino-acid sequence, 618 residues long: MATLMNPVRDPNTLSNYNNWLCTHTTANFEIFFEEKKLVGNVVHKLRSITNAETDEIILDSHHVDIRNVQVAGLPVKAWELLPPLGPYGTALKIKLENPVGLNEIIDVDIAVQTTKECTALQWLTPAQTSNKKHPYMFSQCQAIHARSIFPCQDTPDVKCTFDFNITSPLPVIASGLPVRSTSTVPQSGVKTLHRFHQKVPIPSYLFALASGDIAEAAIGPRSVVATSPDKLEECKWELEADTERFIKTIEEIIYPYAWGEYNVLILPPSFPYGGMENPVFTFATPSIISKDRENVDVIAHELAHSWSGNLVTSASWEHFWLNEGWTVYLERRILASLHGEKYRHFSAIIGWKALRDSVEHYSHDHEFTKLVPNLKGEDPDDAFSTIPYEKGFNFLFHLENLVGKEKFDRFIPHYFTTFKGKSLDSYDFKATLLDFFKSDAEASRLLQELDWDSWFYKPGLPPKPEFDTSLADVVYELAGKWRSLPESPFQPQPSDIQGLTANQIVVFLEQILLFERPLTAELSKLMGEVYGLTGSENIEVANLYLQVGLKAADKSVIGPTTDLLGRIGRMKFVRPLYRALQKVDRQVAIDTFEKHKDFYHPICRGMVEKDLFGKKDA.

A peptide is bound by residues Gln-140 to Gln-142 and Pro-272 to Glu-277. Residue His-301 participates in Zn(2+) binding. The Proton acceptor role is filled by Glu-302. Zn(2+) is bound by residues His-305 and Glu-324. The Proton donor role is filled by Tyr-389.

The protein belongs to the peptidase M1 family. Requires Zn(2+) as cofactor.

The protein resides in the cytoplasm. It localises to the nucleus. It carries out the reaction an epoxide + H2O = an ethanediol. Aminopeptidase that preferentially cleaves di- and tripeptides. Also has low epoxide hydrolase activity (in vitro). Can hydrolyze the epoxide leukotriene LTA(4) but it forms preferentially 5,6-dihydroxy-7,9,11,14-eicosatetraenoic acid rather than the cytokine leukotriene B(4) as the product compared to the homologous mammalian enzyme (in vitro). This chain is Leucine aminopeptidase 2, found in Emericella nidulans (strain FGSC A4 / ATCC 38163 / CBS 112.46 / NRRL 194 / M139) (Aspergillus nidulans).